A 305-amino-acid polypeptide reads, in one-letter code: tRNA dimethylallyltransferase (305 aa).

14–21 (GPTASGKT) contributes to the ATP binding site. Residue 16 to 21 (TASGKT) coordinates substrate. Interaction with substrate tRNA regions lie at residues 39–42 (DSAL), 163–167 (QRIIR), and 243–248 (RCVGYR).

The protein belongs to the IPP transferase family. In terms of assembly, monomer. The cofactor is Mg(2+).

It carries out the reaction adenosine(37) in tRNA + dimethylallyl diphosphate = N(6)-dimethylallyladenosine(37) in tRNA + diphosphate. Functionally, catalyzes the transfer of a dimethylallyl group onto the adenine at position 37 in tRNAs that read codons beginning with uridine, leading to the formation of N6-(dimethylallyl)adenosine (i(6)A). This chain is tRNA dimethylallyltransferase, found in Vesicomyosocius okutanii subsp. Calyptogena okutanii (strain HA).